The primary structure comprises 204 residues: Allurin (204 aa).

Residues 1 to 19 (MDTFNFIICISALFHSTYG) form the signal peptide. The SCP domain maps to 36 to 138 (VDLHNLLRRS…DKMIGHYTQV (103 aa)). A helical membrane pass occupies residues 140–161 (WAKTYLLGCGLAFCPGNYYPYV).

This sequence belongs to the CRISP family. As to expression, expressed only in oviduct.

It is found in the membrane. The protein resides in the secreted. Involved in sperm chemoattraction. This Xenopus tropicalis (Western clawed frog) protein is Allurin (crisp-a).